Here is a 166-residue protein sequence, read N- to C-terminus: Small ribosomal subunit protein uS5 (166 aa).

In terms of domain architecture, S5 DRBM spans 12 to 75 (YIEKLVQVNR…EAARRNMIQV (64 aa)).

The protein belongs to the universal ribosomal protein uS5 family. In terms of assembly, part of the 30S ribosomal subunit. Contacts proteins S4 and S8.

Its function is as follows. With S4 and S12 plays an important role in translational accuracy. Located at the back of the 30S subunit body where it stabilizes the conformation of the head with respect to the body. In Pseudomonas fluorescens (strain Pf0-1), this protein is Small ribosomal subunit protein uS5.